A 196-amino-acid chain; its full sequence is Interleukin-23 subunit alpha (196 aa).

Positions 1–21 are cleaved as a signal peptide; sequence MLDCRAVIMLWLLPWVTQGLA.

Belongs to the IL-6 superfamily. As to quaternary structure, heterodimer with IL12B; disulfide-linked. The heterodimer is known as interleukin IL-23. Interacts with IL23R; this interaction enables recruitment of IL12RB1. Secreted by activated dendritic cells (at protein level). Detected in various tissues with higher expression in polarized Th1 cells and activated macrophages.

The protein resides in the secreted. Associates with IL12B to form the IL-23 interleukin, a heterodimeric cytokine which functions in innate and adaptive immunity. IL-23 may constitute with IL-17 an acute response to infection in peripheral tissues. IL-23 binds to a heterodimeric receptor complex composed of IL12RB1 and IL23R, activates the Jak-Stat signaling cascade, stimulates memory rather than naive T-cells and promotes production of pro-inflammatory cytokines. IL-23 induces autoimmune inflammation and thus may be responsible for autoimmune inflammatory diseases and may be important for tumorigenesis. In terms of biological role, associates with IL12B to form the pro-inflammatory cytokine IL-23 that plays different roles in innate and adaptive immunity. Released by antigen-presenting cells such as dendritic cells or macrophages, binds to a heterodimeric receptor complex composed of IL12RB1 and IL23R to activate JAK2 and TYK2 which then phosphorylate the receptor to form a docking site leading to the phosphorylation of STAT3 and STAT4. This process leads to activation of several pathways including p38 MAPK or NF-kappa-B and promotes the production of pro-inflammatory cytokines such as interleukin-17A/IL17A. In turn, participates in the early and effective intracellular bacterial clearance. Promotes the expansion and survival of T-helper 17 cells, a CD4-positive helper T-cell subset that produces IL-17, as well as other IL-17-producing cells. The polypeptide is Interleukin-23 subunit alpha (Il23a) (Mus musculus (Mouse)).